The primary structure comprises 198 residues: Ribonuclease HII (198 aa).

Residues N11–V198 enclose the RNase H type-2 domain. Residues D17, E18, and D109 each coordinate a divalent metal cation.

This sequence belongs to the RNase HII family. Mn(2+) serves as cofactor. The cofactor is Mg(2+).

The protein resides in the cytoplasm. It carries out the reaction Endonucleolytic cleavage to 5'-phosphomonoester.. Its function is as follows. Endonuclease that specifically degrades the RNA of RNA-DNA hybrids. The chain is Ribonuclease HII from Yersinia pseudotuberculosis serotype O:1b (strain IP 31758).